The sequence spans 131 residues: Small ribosomal subunit protein uS8 (131 aa).

Belongs to the universal ribosomal protein uS8 family. Part of the 30S ribosomal subunit. Contacts proteins S5 and S12.

Its function is as follows. One of the primary rRNA binding proteins, it binds directly to 16S rRNA central domain where it helps coordinate assembly of the platform of the 30S subunit. The sequence is that of Small ribosomal subunit protein uS8 from Methylococcus capsulatus (strain ATCC 33009 / NCIMB 11132 / Bath).